Reading from the N-terminus, the 328-residue chain is 3-ketodihydrosphingosine reductase TSC10 (328 aa).

Residue leucine 16 participates in NADP(+) binding. NADPH-binding residues include glycine 19, serine 21, and glycine 23. The GXSXG motif lies at 19 to 23 (GASQG). An NADP(+)-binding site is contributed by leucine 24. NADPH is bound by residues arginine 44, lysine 48, and aspartate 73. Aspartate 73 contacts NADP(+). Serine 161 functions as the Proton donor in the catalytic mechanism. NADP(+) is bound by residues tyrosine 175, lysine 179, and serine 210. Residue tyrosine 175 is the Proton acceptor of the active site. The Lowers pKa of active site Tyr role is filled by lysine 179. A helical transmembrane segment spans residues 277-297 (FFQVIVSFIFSIIAPIANYVV).

This sequence belongs to the short-chain dehydrogenases/reductases (SDR) family.

It localises to the endoplasmic reticulum membrane. It carries out the reaction sphinganine + NADP(+) = 3-oxosphinganine + NADPH + H(+). It participates in lipid metabolism; sphingolipid metabolism. Its function is as follows. Catalyzes the reduction of 3'-oxosphinganine (3-ketodihydrosphingosine/KDS) to sphinganine (dihydrosphingosine/DHS), the second step of de novo sphingolipid biosynthesis. The protein is 3-ketodihydrosphingosine reductase TSC10 (TSC10) of Debaryomyces hansenii (strain ATCC 36239 / CBS 767 / BCRC 21394 / JCM 1990 / NBRC 0083 / IGC 2968) (Yeast).